The following is a 326-amino-acid chain: Transcription factor MYB16 (326 aa).

HTH myb-type domains are found at residues 9-61 (KLGL…TNYL) and 62-116 (RPDI…KKRL). 2 consecutive DNA-binding regions (H-T-H motif) follow at residues 37–61 (WRSLPEKAGLHRCGKSCRLRWTNYL) and 89–112 (WSAIATHLPKRTDNEIKNYWNTHL). Disordered regions lie at residues 197 to 217 (NWTTKPHEDQQQLESPTSTVS) and 280 to 299 (DRSFSGDKNETAGESSGGDC). Over residues 208–217 (QLESPTSTVS) the composition is skewed to polar residues. Over residues 280-290 (DRSFSGDKNET) the composition is skewed to basic and acidic residues.

As to expression, expressed in trichomes, epidermis and mesophyll cells of young leaves, stems, petals, sepals, carpels and stamens.

The protein localises to the nucleus. Its function is as follows. Involved in the control of epidermal cell morphogenesis in petals. Promotes unidirectional cell expansion once outgrowth has been initiated. Coordinately with WIN1/SHN1, participates in the regulation of cuticle biosynthesis and wax accumulation in reproductive organs and trichomes. Functions in cuticle nanoridge formation in petals and stamens, and in morphogenesis of petal conical cells and trichomes. Functions as a major regulator of cuticle formation in vegetative organs by regulating the cuticle biosynthesis genes CYP86A8/LCR and CER1. The protein is Transcription factor MYB16 of Arabidopsis thaliana (Mouse-ear cress).